A 585-amino-acid polypeptide reads, in one-letter code: S-antigen protein (585 aa).

Positions 1–23 (MNRILSVTLCLFFIYLYIYKTYG) are cleaved as a signal peptide. Positions 51–585 (NGKGQKYEDL…NSIINMLIGM (535 aa)) are disordered. Over residues 59–85 (DLEEEKEGENDDEEDSNSEESNNDEEN) the composition is skewed to acidic residues. Over residues 96–113 (QETHGSEDEVSNGREDKV) the composition is skewed to basic and acidic residues. A run of 56 repeats spans residues 102–109 (EDEVSNGR), 110–117 (EDKVSNGG), 118–125 (EDEVSNGG), 126–133 (EDEVSNGR), 134–141 (EDKVSNGG), 142–149 (EDEVSNGR), 150–157 (EDKVSNGG), 158–165 (EDEVSNGR), 166–173 (EDKVSNGG), 174–181 (EDEVSNGR), 182–189 (EDKVSNGG), 190–197 (EDEVSNGR), 198–205 (EDKVSNGR), 206–213 (EDKVSNGG), 214–221 (EDEVSNGR), 222–229 (EDKVSNGR), 230–237 (EDKVSNGG), 238–245 (EDEVSNGR), 246–253 (EDKVSNGG), 254–261 (EDEVSNGR), 262–269 (EDKVSNGG), 270–277 (EDEVSNGR), 278–285 (EDKVSNGR), 286–293 (EDEVSNGR), 294–301 (EDKVSNGG), 302–309 (EDEVSNGR), 310–317 (EDKVSNGG), 318–325 (EDEVSNGR), 326–333 (EDKVSNGR), 334–341 (EDKVSNGG), 342–349 (EDEVSNGR), 350–357 (EDKVSNGG), 358–365 (EDEVSNGR), 366–373 (EDKVSNGR), 374–381 (EDKVSNGR), 382–389 (EDEVSNGR), 390–397 (EDKVSNGG), 398–405 (EDEVSNGR), 406–413 (EDKVSNGR), 414–421 (EDKVSNGG), 422–429 (EDEVSNGR), 430–437 (EDKVSNGG), 438–445 (EDEVSNGR), 446–453 (EDKVSNGR), 454–461 (EDKVSNGR), 462–469 (EDKVSNGG), 470–477 (EDEVSNGG), 478–485 (EDEVSNGR), 486–493 (EDKVSNGG), 494–501 (EDEVSNGR), 502–509 (EDKVSNGG), 510–517 (EDEVSNGR), 518–525 (EDKVSNGG), 526–533 (EDEVSNGR), 534–541 (EDKVSNGR), and 542–549 (EDEVSNGR). The tract at residues 102 to 549 (EDEVSNGRED…GREDEVSNGR (448 aa)) is 56 X 8 AA tandem repeats of E-D-[EK]-V-S-N-G-[RG]. Residues 117-129 (GEDEVSNGGEDEV) are compositionally biased toward acidic residues. Basic and acidic residues-rich tracts occupy residues 194–209 (SNGR…EDKV) and 218–233 (SNGR…EDKV). Residues 274–297 (SNGREDKVSNGREDEVSNGREDKV) show a composition bias toward basic and acidic residues. The span at 322 to 337 (SNGREDKVSNGREDKV) shows a compositional bias: basic and acidic residues. Composition is skewed to basic and acidic residues over residues 362-393 (SNGR…EDKV) and 402-417 (SNGR…EDKV). Residues 442–465 (SNGREDKVSNGREDKVSNGREDKV) show a composition bias toward basic and acidic residues. Residues 469 to 481 (GEDEVSNGGEDEV) are compositionally biased toward acidic residues. Basic and acidic residues-rich tracts occupy residues 530 to 553 (SNGR…EDKG) and 560 to 569 (ELSHNSESHT). Over residues 576-585 (NSIINMLIGM) the composition is skewed to low complexity.

It is found in the parasitophorous vacuole. In terms of biological role, s antigens are soluble heat-stable proteins present in the sera of some infected individuals. This chain is S-antigen protein, found in Plasmodium falciparum (isolate 3D7).